Reading from the N-terminus, the 395-residue chain is S-adenosylmethionine synthase (395 aa).

Residue histidine 16 participates in ATP binding. A Mg(2+)-binding site is contributed by aspartate 18. Residue glutamate 44 participates in K(+) binding. The L-methionine site is built by glutamate 57 and glutamine 100. The flexible loop stretch occupies residues 100 to 110 (QSPDIAQGVDR). Residues 167–169 (DAK), 233–234 (RF), aspartate 242, 248–249 (RK), alanine 265, and lysine 269 contribute to the ATP site. Position 242 (aspartate 242) interacts with L-methionine. Residue lysine 273 participates in L-methionine binding.

The protein belongs to the AdoMet synthase family. Homotetramer; dimer of dimers. Mg(2+) is required as a cofactor. Requires K(+) as cofactor.

The protein resides in the cytoplasm. It catalyses the reaction L-methionine + ATP + H2O = S-adenosyl-L-methionine + phosphate + diphosphate. It participates in amino-acid biosynthesis; S-adenosyl-L-methionine biosynthesis; S-adenosyl-L-methionine from L-methionine: step 1/1. Catalyzes the formation of S-adenosylmethionine (AdoMet) from methionine and ATP. The overall synthetic reaction is composed of two sequential steps, AdoMet formation and the subsequent tripolyphosphate hydrolysis which occurs prior to release of AdoMet from the enzyme. The sequence is that of S-adenosylmethionine synthase from Burkholderia mallei (strain NCTC 10247).